The following is a 294-amino-acid chain: Deubiquitinase OTUD6B (294 aa).

Disordered regions lie at residues 1–46 (MDEA…RKQL) and 67–120 (AFAQ…ERDE). Composition is skewed to polar residues over residues 27–36 (KIQSMKNSVP) and 73–86 (PEPT…NGVT). Positions 111-120 (KAAQEKERDE) are enriched in basic and acidic residues. Residues 150 to 287 (LQIRQIPSDG…GEHYNSVELL (138 aa)) enclose the OTU domain. Residues 155–161 (IPSDGHC) are cys-loop. D158 is a catalytic residue. C161 (nucleophile) is an active-site residue. Residues 222-232 (IVNTPAWGGQL) form a variable-loop region. A his-loop region spans residues 270–280 (YMRHAYGLGEH). H280 is an active-site residue.

The enzyme catalyses Thiol-dependent hydrolysis of ester, thioester, amide, peptide and isopeptide bonds formed by the C-terminal Gly of ubiquitin (a 76-residue protein attached to proteins as an intracellular targeting signal).. In terms of biological role, deubiquitinating enzyme that may play a role in the ubiquitin-dependent regulation of different cellular processes. The sequence is that of Deubiquitinase OTUD6B (otud6b) from Xenopus tropicalis (Western clawed frog).